A 140-amino-acid chain; its full sequence is Large ribosomal subunit protein uL11 (140 aa).

This sequence belongs to the universal ribosomal protein uL11 family. In terms of assembly, part of the ribosomal stalk of the 50S ribosomal subunit. Interacts with L10 and the large rRNA to form the base of the stalk. L10 forms an elongated spine to which L12 dimers bind in a sequential fashion forming a multimeric L10(L12)X complex. Post-translationally, one or more lysine residues are methylated.

Forms part of the ribosomal stalk which helps the ribosome interact with GTP-bound translation factors. The chain is Large ribosomal subunit protein uL11 from Dehalococcoides mccartyi (strain ATCC BAA-2100 / JCM 16839 / KCTC 5957 / BAV1).